The chain runs to 185 residues: Threonylcarbamoyl-AMP synthase (185 aa).

The YrdC-like domain maps to 1–185; it reads MDNLQQVVSA…AFSDTVLRQG (185 aa).

It belongs to the SUA5 family. TsaC subfamily.

The protein localises to the cytoplasm. It catalyses the reaction L-threonine + hydrogencarbonate + ATP = L-threonylcarbamoyladenylate + diphosphate + H2O. In terms of biological role, required for the formation of a threonylcarbamoyl group on adenosine at position 37 (t(6)A37) in tRNAs that read codons beginning with adenine. Catalyzes the conversion of L-threonine, HCO(3)(-)/CO(2) and ATP to give threonylcarbamoyl-AMP (TC-AMP) as the acyladenylate intermediate, with the release of diphosphate. The sequence is that of Threonylcarbamoyl-AMP synthase from Photobacterium profundum (strain SS9).